Here is a 421-residue protein sequence, read N- to C-terminus: Protein HOMOLOG OF MAMMALIAN LYST-INTERACTING PROTEIN 5 (421 aa).

S2 is subject to N-acetylserine. A disordered region spans residues 146 to 374 (IKEGRKPTPG…KYHYDSSYQP (229 aa)). Positions 165–185 (SIPSSGPSGSYDHSASDTNTT) are enriched in polar residues. Basic and acidic residues predominate over residues 188–207 (HRTELDPPHDSNDDSSHHQF). A compositionally biased stretch (pro residues) spans 245-258 (LPPPTGPSDSPYPH). The segment covering 278–293 (NYSSHEPSPNSLPNFQ) has biased composition (polar residues). Composition is skewed to low complexity over residues 294-308 (SYPSFSESSLPSTSP) and 317-337 (PEPYYSSPHSAPAPSSTSFSS).

It belongs to the VTA1 family. As to quaternary structure, homodimer. Interacts with SKD1/VPS4, VPS60-1, CHMP1A and CHMP1B. Binds to PROS/At4g24370. Interacts with MPK6 and MPK3. Phosphorylated by activated MPK6 and MPK3, this activation is required to trigger multivesicular bodies (MVBs) trafficking upon plant infection.

It is found in the cytoplasm. The protein localises to the endosome membrane. The protein resides in the nucleus. It localises to the endosome. Its subcellular location is the multivesicular body. Functionally, involved in the endosomal multivesicular bodies (MVB) pathway. MVBs contain intraluminal vesicles (ILVs) that are generated by invagination and scission from the limiting membrane of the endosome and are delivered to lysosomes enabling degradation of membrane proteins. Thought to be a cofactor of SKD1/VPS4, which catalyzes the disassembly of membrane-associated ESCRT-III. Target of pathogen-responsive mitogen-activated protein kinases (MPKs) that plays a critical role in plant basal resistance to Pseudomonas syringae in a SKD1-dependent manner by promoting multivesicular bodies (MVBs) trafficking upon plant infection. This chain is Protein HOMOLOG OF MAMMALIAN LYST-INTERACTING PROTEIN 5, found in Arabidopsis thaliana (Mouse-ear cress).